The following is a 459-amino-acid chain: Cysteine--tRNA ligase (459 aa).

Cys28 is a binding site for Zn(2+). The 'HIGH' region motif lies at 30–40; the sequence is VTVYDLCHFGH. Zn(2+) contacts are provided by Cys209, His234, and Glu238. The short motif at 266–270 is the 'KMSKS' region element; the sequence is KMSKS. Lys269 is an ATP binding site.

It belongs to the class-I aminoacyl-tRNA synthetase family. Monomer. It depends on Zn(2+) as a cofactor.

Its subcellular location is the cytoplasm. The catalysed reaction is tRNA(Cys) + L-cysteine + ATP = L-cysteinyl-tRNA(Cys) + AMP + diphosphate. The protein is Cysteine--tRNA ligase of Actinobacillus pleuropneumoniae serotype 3 (strain JL03).